A 327-amino-acid polypeptide reads, in one-letter code: UDP-glucose 4-epimerase (327 aa).

Residue threonine 119 participates in substrate binding. Residue tyrosine 143 is the Proton acceptor of the active site.

This sequence belongs to the NAD(P)-dependent epimerase/dehydratase family. It depends on NAD(+) as a cofactor.

The catalysed reaction is UDP-alpha-D-glucose = UDP-alpha-D-galactose. Its pathway is carbohydrate metabolism; galactose metabolism. The protein operates within glycan metabolism; exopolysaccharide biosynthesis. The sequence is that of UDP-glucose 4-epimerase (exoB) from Rhizobium leguminosarum bv. trifolii.